Consider the following 306-residue polypeptide: Glutaminase (306 aa).

Residues serine 64, asparagine 115, glutamate 159, asparagine 166, tyrosine 190, tyrosine 242, and valine 260 each coordinate substrate.

This sequence belongs to the glutaminase family. As to quaternary structure, homotetramer.

The catalysed reaction is L-glutamine + H2O = L-glutamate + NH4(+). The sequence is that of Glutaminase from Vibrio cholerae serotype O1 (strain ATCC 39541 / Classical Ogawa 395 / O395).